Reading from the N-terminus, the 218-residue chain is Nonsense-mediated decay protein 4 (218 aa).

The protein resides in the cytoplasm. In terms of biological role, involved in nonsense-mediated decay of mRNAs containing premature stop codons. The sequence is that of Nonsense-mediated decay protein 4 (NMD4) from Saccharomyces cerevisiae (strain ATCC 204508 / S288c) (Baker's yeast).